Reading from the N-terminus, the 541-residue chain is Metal transporter Nramp1 (541 aa).

Residue Asn-17 is glycosylated (N-linked (GlcNAc...) asparagine). Transmembrane regions (helical) follow at residues 45–65 (LFAY…PGNF), 78–98 (ELLW…SLAA), 122–142 (FILW…EVIG), 153–173 (IPVW…LALQ), 182–202 (LFIA…LGYA), 222–242 (GAAG…NLFL), 271–291 (GFAL…SGAV), 315–335 (FLLE…ALLA), 371–391 (SLAI…GAGK), and 392–412 (LIII…VPLL). A glycan (N-linked (GlcNAc...) asparagine) is linked at Asn-426. The next 2 helical transmembrane spans lie at 430 to 450 (ISSI…YYLA) and 465 to 485 (VAAI…LAGV). Residue Asn-511 is glycosylated (N-linked (GlcNAc...) asparagine).

Belongs to the NRAMP (TC 2.A.55) family.

The protein localises to the membrane. In terms of biological role, probable divalent metal transporter. This is Metal transporter Nramp1 from Populus trichocarpa (Western balsam poplar).